We begin with the raw amino-acid sequence, 431 residues long: Alpha-gurjunene synthase (431 aa).

Residues Asp126 and Asp130 each coordinate Mg(2+). Position 267 (Arg267) interacts with (2E,6E)-farnesyl diphosphate. The Mg(2+) site is built by Asn321 and Ser325. Lys328 contacts (2E,6E)-farnesyl diphosphate. Glu329 is a Mg(2+) binding site. 412–413 (RY) is a binding site for (2E,6E)-farnesyl diphosphate.

This sequence belongs to the terpene synthase family. The cofactor is Mg(2+).

The enzyme catalyses (2E,6E)-farnesyl diphosphate = (-)-alpha-gurjunene + diphosphate. The catalysed reaction is (2E,6E)-farnesyl diphosphate + H2O = 5-hydroxy-alpha-gurjunene + diphosphate. It participates in secondary metabolite biosynthesis; terpenoid biosynthesis. In terms of biological role, catalyzes the conversion of (2E,6E)-farnesyl diphosphate (FPP) into the sesquiterpene alcohols (-)-alpha-gurjunene and 5-hydroxy-alpha-gurjunene. Other unidentified sesquiterpene alcohols found to be catalyzed by MTPSL4 may arise from carbocation reaction intermediates along the catalytic cascade to gurjunene being quenched by a water molecule, yielding formation of the alcohols. The chain is Alpha-gurjunene synthase from Marchantia polymorpha (Common liverwort).